A 253-amino-acid chain; its full sequence is 1-(5-phosphoribosyl)-5-[(5-phosphoribosylamino)methylideneamino] imidazole-4-carboxamide isomerase (253 aa).

The Proton acceptor role is filled by D19. Catalysis depends on D141, which acts as the Proton donor.

Belongs to the HisA/HisF family.

The protein localises to the cytoplasm. It carries out the reaction 1-(5-phospho-beta-D-ribosyl)-5-[(5-phospho-beta-D-ribosylamino)methylideneamino]imidazole-4-carboxamide = 5-[(5-phospho-1-deoxy-D-ribulos-1-ylimino)methylamino]-1-(5-phospho-beta-D-ribosyl)imidazole-4-carboxamide. The protein operates within amino-acid biosynthesis; L-histidine biosynthesis; L-histidine from 5-phospho-alpha-D-ribose 1-diphosphate: step 4/9. The polypeptide is 1-(5-phosphoribosyl)-5-[(5-phosphoribosylamino)methylideneamino] imidazole-4-carboxamide isomerase (Rhodopirellula baltica (strain DSM 10527 / NCIMB 13988 / SH1)).